Reading from the N-terminus, the 674-residue chain is Probable DNA helicase MCM9 (674 aa).

The C4-type zinc-finger motif lies at Cys165 to Cys198. The 204-residue stretch at Gly318–Ile521 folds into the MCM domain. Gly368–Ser375 is a binding site for ATP. Residues Ser497 to Asp500 carry the Arginine finger motif.

The protein belongs to the MCM family.

It localises to the nucleus. The enzyme catalyses ATP + H2O = ADP + phosphate + H(+). Its function is as follows. Probable DNA helicase that may play a role in DNA repair during meiosis. The chain is Probable DNA helicase MCM9 (MCM9) from Oryza sativa subsp. indica (Rice).